A 750-amino-acid polypeptide reads, in one-letter code: Protein O-mannosyl-transferase 2 (750 aa).

Positions 1-23 (MPPATGGGLAESELRPRRGRCGP) are disordered. Ser-41 is subject to Phosphoserine. The helical transmembrane segment at 54–74 (AVGWWALLALVTLLSFATRFH) threads the bilayer. Asn-98 is a glycosylation site (N-linked (GlcNAc...) asparagine). Transmembrane regions (helical) follow at residues 100-120 (TFFFDVHPPLGKMLIGLAGYL), 146-166 (GFCAFLGSWLVPFAYLTVLDL), 191-211 (QYILLDPILMFFIMAAMLSMV), 231-251 (LTGVSLAGALGVKFVGLFIIL), and 283-303 (VLCLIVLPLALYTATFAVHFM). Asn-330 carries an N-linked (GlcNAc...) asparagine glycan. MIR domains are found at residues 334–390 (PEHL…IKKH), 403–459 (VEFV…IEVV), and 464–521 (GNRI…VEDH). Asn-445 carries N-linked (GlcNAc...) asparagine glycosylation. 2 N-linked (GlcNAc...) asparagine glycosylation sites follow: Asn-528 and Asn-583. Transmembrane regions (helical) follow at residues 596–616 (VVWWLNLLSIALYLLSGSIIA), 643–663 (VLLGWTLHYFPFFLMGRVLYF), 665–685 (HYFPAMLFSSMLTGILWDTLL), and 700–720 (GIHVAGILSLLLGTAYSFYLF).

The protein belongs to the glycosyltransferase 39 family. In terms of assembly, interacts with POMT1. N-glycosylated. In terms of tissue distribution, highly expressed in testis; detected at low levels in most tissues.

It is found in the endoplasmic reticulum membrane. It catalyses the reaction a di-trans,poly-cis-dolichyl beta-D-mannosyl phosphate + L-seryl-[protein] = 3-O-(alpha-D-mannosyl)-L-seryl-[protein] + a di-trans,poly-cis-dolichyl phosphate + H(+). The enzyme catalyses a di-trans,poly-cis-dolichyl beta-D-mannosyl phosphate + L-threonyl-[protein] = 3-O-(alpha-D-mannosyl)-L-threonyl-[protein] + a di-trans,poly-cis-dolichyl phosphate + H(+). It participates in protein modification; protein glycosylation. Slightly activated by Mg(2+) and inhibited by both Ca(+) and Mn(2+). EDTA ha no effect on activity in vitro. In terms of biological role, transfers mannosyl residues to the hydroxyl group of serine or threonine residues. Coexpression of both POMT1 and POMT2 is necessary for enzyme activity, expression of either POMT1 or POMT2 alone is insufficient. Essentially dedicated to O-mannosylation of alpha-DAG1 and few other proteins but not of cadherins and protocaherins. The sequence is that of Protein O-mannosyl-transferase 2 (POMT2) from Homo sapiens (Human).